The following is a 427-amino-acid chain: Proline--tRNA ligase (427 aa).

Belongs to the class-II aminoacyl-tRNA synthetase family. ProS type 2 subfamily. Homodimer.

Its subcellular location is the cytoplasm. The catalysed reaction is tRNA(Pro) + L-proline + ATP = L-prolyl-tRNA(Pro) + AMP + diphosphate. Functionally, catalyzes the attachment of proline to tRNA(Pro) in a two-step reaction: proline is first activated by ATP to form Pro-AMP and then transferred to the acceptor end of tRNA(Pro). This is Proline--tRNA ligase from Rickettsia akari (strain Hartford).